The sequence spans 134 residues: Small ribosomal subunit protein uS8c (134 aa).

Belongs to the universal ribosomal protein uS8 family. Part of the 30S ribosomal subunit.

It localises to the plastid. Its subcellular location is the chloroplast. Functionally, one of the primary rRNA binding proteins, it binds directly to 16S rRNA central domain where it helps coordinate assembly of the platform of the 30S subunit. This chain is Small ribosomal subunit protein uS8c (rps8), found in Arabis hirsuta (Hairy rock-cress).